A 310-amino-acid polypeptide reads, in one-letter code: Putative S-adenosyl-L-methionine-dependent methyltransferase MSMEG_1888/MSMEI_1848 (310 aa).

S-adenosyl-L-methionine is bound by residues D128 and 157–158 (DL).

The protein belongs to the UPF0677 family.

Functionally, exhibits S-adenosyl-L-methionine-dependent methyltransferase activity. In Mycolicibacterium smegmatis (strain ATCC 700084 / mc(2)155) (Mycobacterium smegmatis), this protein is Putative S-adenosyl-L-methionine-dependent methyltransferase MSMEG_1888/MSMEI_1848.